The following is a 435-amino-acid chain: Acetylcholine receptor-like protein cup-4 (435 aa).

The first 24 residues, 1–24 (MRLLLIFTVIFVFYLAILKRDVNA), serve as a signal peptide directing secretion. N-linked (GlcNAc...) asparagine glycans are attached at residues Asn-41, Asn-68, Asn-237, and Asn-249. The next 2 membrane-spanning stretches (helical) occupy residues 298–318 (VSFFAPTVSLAFVINLMAIYL) and 341–361 (ITLFHILLISNIVSAVFHGVL). N-linked (GlcNAc...) asparagine glycosylation occurs at Asn-403. Residues 413–433 (PLAGLAMFVYFVIMFILYLVV) traverse the membrane as a helical segment.

This sequence belongs to the ligand-gated ion channel (TC 1.A.9) family. Acetylcholine receptor (TC 1.A.9.1) subfamily.

It is found in the cytoplasmic vesicle membrane. Functionally, thought to regulate endocytosis in coelomocytes through modulation of phospholipase C activity. Possible acetylcholine receptor. In Caenorhabditis briggsae, this protein is Acetylcholine receptor-like protein cup-4.